Here is a 436-residue protein sequence, read N- to C-terminus: UBX domain-containing protein 7 (436 aa).

Residue K19 forms a Glycyl lysine isopeptide (Lys-Gly) (interchain with G-Cter in ubiquitin) linkage. Positions 115-141 (AGESSSRETNPGLAREEKSSRDVHRKN) are disordered. One can recognise a UBX domain in the interval 212 to 290 (LHSSKCVLQI…ELTPRSALLL (79 aa)). Residues 325–346 (DKDPEVTSQREETSKPNRHEVR) are compositionally biased toward basic and acidic residues. Disordered stretches follow at residues 325 to 357 (DKDPEVTSQREETSKPNRHEVRSSTPLSGAASS) and 371 to 436 (SSAH…EDKK). A compositionally biased stretch (low complexity) spans 347–357 (SSTPLSGAASS). Residues 371-408 (SSAHASPMLTPSGTRYPSETNLTTSRSVSPNVFQFVNN) are compositionally biased toward polar residues. S388 is modified (phosphoserine). Residues 426 to 436 (HLEKKKDEDKK) show a composition bias toward basic and acidic residues.

As to quaternary structure, interacts with CDC48.

The protein resides in the endoplasmic reticulum. Functionally, involved in CDC48-dependent protein degradation through the ubiquitin/proteasome pathway. In Saccharomyces cerevisiae (strain ATCC 204508 / S288c) (Baker's yeast), this protein is UBX domain-containing protein 7 (UBX7).